Consider the following 518-residue polypeptide: Glutamate--cysteine ligase (518 aa).

This sequence belongs to the glutamate--cysteine ligase type 1 family. Type 1 subfamily.

It carries out the reaction L-cysteine + L-glutamate + ATP = gamma-L-glutamyl-L-cysteine + ADP + phosphate + H(+). It functions in the pathway sulfur metabolism; glutathione biosynthesis; glutathione from L-cysteine and L-glutamate: step 1/2. In Citrobacter koseri (strain ATCC BAA-895 / CDC 4225-83 / SGSC4696), this protein is Glutamate--cysteine ligase.